The chain runs to 341 residues: Heterogeneous nuclear ribonucleoproteins A2/B1 (341 aa).

RRM domains lie at 9-92 (RKLF…ESGK) and 100-179 (KKLF…LSRQ). A Glycyl lysine isopeptide (Lys-Gly) (interchain with G-Cter in SUMO2) cross-link involves residue Lys-10. Ser-17 carries the phosphoserine modification. The residue at position 26 (Arg-26) is an Omega-N-methylarginine. Position 73 is a phosphoserine (Ser-73). Lys-92 is modified (N6,N6-dimethyllysine; alternate). Lys-92 participates in a covalent cross-link: Glycyl lysine isopeptide (Lys-Gly) (interchain with G-Cter in SUMO2); alternate. Glycyl lysine isopeptide (Lys-Gly) (interchain with G-Cter in SUMO2) cross-links involve residues Lys-100, Lys-108, and Lys-125. Position 128 is a phosphothreonine (Thr-128). A Phosphoserine modification is found at Ser-137. A Glycyl lysine isopeptide (Lys-Gly) (interchain with G-Cter in SUMO2) cross-link involves residue Lys-140. Thr-147 is modified (phosphothreonine). Glycyl lysine isopeptide (Lys-Gly) (interchain with G-Cter in SUMO2); alternate cross-links involve residues Lys-156 and Lys-161. 2 positions are modified to N6-acetyllysine; alternate: Lys-156 and Lys-161. At Thr-164 the chain carries Phosphothreonine. Residue Lys-174 forms a Glycyl lysine isopeptide (Lys-Gly) (interchain with G-Cter in SUMO2) linkage. Phosphoserine occurs at positions 177 and 189. The interval 181–341 (MQEVQSSRSG…SGGYGGRSRY (161 aa)) is disordered. Residues 190–211 (GRGGNFGFGDSRGGGGNFGPGP) show a composition bias toward gly residues. Arg-191 is modified (asymmetric dimethylarginine; alternate). Arg-191 bears the Dimethylated arginine; alternate mark. Arg-191 is modified (omega-N-methylarginine; alternate). The residue at position 200 (Ser-200) is a Phosphoserine. Arg-201 carries the asymmetric dimethylarginine; alternate modification. Residue Arg-201 is modified to Dimethylated arginine; alternate. Residue Arg-201 is modified to Omega-N-methylarginine; alternate. Ser-213 is subject to Phosphoserine. Arg-216 bears the Omega-N-methylarginine mark. Ser-219 and Ser-224 each carry phosphoserine. Arg-226 is subject to Omega-N-methylarginine. Residue Ser-247 is modified to Phosphoserine. Arg-254 bears the Asymmetric dimethylarginine; alternate mark. Arg-254 is modified (omega-N-methylarginine; alternate). A nuclear targeting sequence region spans residues 296 to 335 (QQPSNYGPMKSGNFGGSRNMGGPYGGGNYGPGGSGGSGGY). Residues 308–341 (NFGGSRNMGGPYGGGNYGPGGSGGSGGYGGRSRY) are compositionally biased toward gly residues. Position 312 is a phosphoserine (Ser-312). Arg-313 carries the omega-N-methylarginine modification. Tyr-319 is modified (phosphotyrosine). Phosphoserine occurs at positions 329 and 332. Phosphotyrosine is present on Tyr-335. Arg-338 carries the post-translational modification Omega-N-methylarginine.

In terms of assembly, identified in the spliceosome C complex. Identified in a IGF2BP1-dependent mRNP granule complex containing untranslated mRNAs. Interacts with IGF2BP1. Interacts with C9orf72. Interacts with DGCR8. Interacts with TARDBP. Interacts with CKAP5. Interacts with PPIA/CYPA. Interacts (via C-terminus) with FAM76B; the interaction results in retention of HNRNPA2B1 in the nucleus and inhibition of the NF-kappa-B-mediated inflammatory pathway. Interacts with NF-kappa-B inhibitors NFKBIA and NFKBIE; the interaction may be mediated by the RRM2 domain of HNRNPA2B1, and HNRNPA2B1 may interact simultaneously with FAM76B and either NFKBIA or NFKBIE to form a complex. In terms of processing, sumoylated in exosomes, promoting miRNAs-binding. Post-translationally, asymmetric dimethylation at Arg-254 constitutes the major methylation site. According to a report, methylation affects subcellular location and promotes nuclear localization. According to another report, methylation at Arg-254 does not influence nucleocytoplasmic shuttling.

Its subcellular location is the nucleus. The protein localises to the nucleoplasm. It localises to the cytoplasmic granule. The protein resides in the secreted. It is found in the extracellular exosome. In terms of biological role, heterogeneous nuclear ribonucleoprotein (hnRNP) that associates with nascent pre-mRNAs, packaging them into hnRNP particles. The hnRNP particle arrangement on nascent hnRNA is non-random and sequence-dependent and serves to condense and stabilize the transcripts and minimize tangling and knotting. Packaging plays a role in various processes such as transcription, pre-mRNA processing, RNA nuclear export, subcellular location, mRNA translation and stability of mature mRNAs. Forms hnRNP particles with at least 20 other different hnRNP and heterogeneous nuclear RNA in the nucleus. Involved in transport of specific mRNAs to the cytoplasm in oligodendrocytes and neurons: acts by specifically recognizing and binding the A2RE (21 nucleotide hnRNP A2 response element) or the A2RE11 (derivative 11 nucleotide oligonucleotide) sequence motifs present on some mRNAs, and promotes their transport to the cytoplasm. Specifically binds single-stranded telomeric DNA sequences, protecting telomeric DNA repeat against endonuclease digestion. Also binds other RNA molecules, such as primary miRNA (pri-miRNAs): acts as a nuclear 'reader' of the N6-methyladenosine (m6A) mark by specifically recognizing and binding a subset of nuclear m6A-containing pri-miRNAs. Binding to m6A-containing pri-miRNAs promotes pri-miRNA processing by enhancing binding of DGCR8 to pri-miRNA transcripts. Involved in miRNA sorting into exosomes following sumoylation, possibly by binding (m6A)-containing pre-miRNAs. Acts as a regulator of efficiency of mRNA splicing, possibly by binding to m6A-containing pre-mRNAs. Plays a role in the splicing of pyruvate kinase PKM by binding repressively to sequences flanking PKM exon 9, inhibiting exon 9 inclusion and resulting in exon 10 inclusion and production of the PKM M2 isoform. The chain is Heterogeneous nuclear ribonucleoproteins A2/B1 (HNRNPA2B1) from Bos taurus (Bovine).